The following is a 302-amino-acid chain: tRNA demethylase abh1 (302 aa).

Substrate is bound by residues tryptophan 142 and 149–151 (YDW). Positions 187 to 299 (KAEAAIVNFY…RVNFNVRQVR (113 aa)) constitute a Fe2OG dioxygenase domain. Residue 194-196 (NFY) participates in 2-oxoglutarate binding. Positions 205 and 207 each coordinate Fe cation. A substrate-binding site is contributed by arginine 235. Histidine 261 contacts Fe cation. 290–296 (RVNFNVR) contributes to the 2-oxoglutarate binding site.

Belongs to the alkB family. Requires Fe(2+) as cofactor.

The protein resides in the cytoplasm. It localises to the nucleus. The enzyme catalyses an N(1)-methyladenosine in tRNA + 2-oxoglutarate + O2 = an adenosine in tRNA + formaldehyde + succinate + CO2. It catalyses the reaction N(1)-methyladenosine(58) in tRNA + 2-oxoglutarate + O2 = adenosine(58) in tRNA + formaldehyde + succinate + CO2. Dioxygenase that acts as on nucleic acids, such as DNA and tRNA. Requires molecular oxygen, alpha-ketoglutarate and iron. Mainly acts as a tRNA demethylase by removing N(1)-methyladenine from various tRNAs, with a preference for N(1)-methyladenine at position 58 (m1A58) present on a stem loop structure of tRNAs. Acts as a regulator of translation initiation and elongation. Does not appear to possess DNA repair activity; no activity towards methylated DNA or etheno adducts. Exhibits a weak and unstable DNA lyase activity; this activity is probably not biologically significant and proceeds by a mechanism different from the classical dioxygenase reaction as it does not require 2-oxoglutarate or iron. The chain is tRNA demethylase abh1 (abh1) from Schizosaccharomyces pombe (strain 972 / ATCC 24843) (Fission yeast).